The primary structure comprises 340 residues: GTP 3',8-cyclase (340 aa).

In terms of domain architecture, Radical SAM core spans 8–227 (KLGRPIRDLR…SMIQEEFDIE (220 aa)). Residue arginine 17 participates in GTP binding. 2 residues coordinate [4Fe-4S] cluster: cysteine 24 and cysteine 28. Tyrosine 30 lines the S-adenosyl-L-methionine pocket. Cysteine 31 is a binding site for [4Fe-4S] cluster. Arginine 71 is a GTP binding site. Residue glycine 75 participates in S-adenosyl-L-methionine binding. Threonine 102 is a binding site for GTP. Residue serine 126 participates in S-adenosyl-L-methionine binding. Lysine 163 provides a ligand contact to GTP. Methionine 197 contributes to the S-adenosyl-L-methionine binding site. [4Fe-4S] cluster is bound by residues cysteine 261 and cysteine 264. 266-268 (RAR) provides a ligand contact to GTP. Residue cysteine 278 coordinates [4Fe-4S] cluster.

The protein belongs to the radical SAM superfamily. MoaA family. Monomer and homodimer. It depends on [4Fe-4S] cluster as a cofactor.

The enzyme catalyses GTP + AH2 + S-adenosyl-L-methionine = (8S)-3',8-cyclo-7,8-dihydroguanosine 5'-triphosphate + 5'-deoxyadenosine + L-methionine + A + H(+). It functions in the pathway cofactor biosynthesis; molybdopterin biosynthesis. Functionally, catalyzes the cyclization of GTP to (8S)-3',8-cyclo-7,8-dihydroguanosine 5'-triphosphate. This Staphylococcus carnosus (strain TM300) protein is GTP 3',8-cyclase.